Consider the following 231-residue polypeptide: CD302 antigen (231 aa).

Positions 1–21 (MSAAVVATLPTLLLLLGLAAA) are cleaved as a signal peptide. The Extracellular segment spans residues 22-169 (DCPSSSWVQF…YEKKYLPDHH (148 aa)). Residues 31-153 (FQSNCYIFLQ…CEVSSVEGAL (123 aa)) enclose the C-type lectin domain. N-linked (GlcNAc...) asparagine glycosylation occurs at Asn110. An intrachain disulfide couples Cys129 to Cys144. A helical membrane pass occupies residues 170-190 (ILITALVIASTTILTITGAVV). Topologically, residues 191 to 231 (WFLYKRNLTSGLTNTAYTTAPQLPYNDDCILVDAEENEYVA) are cytoplasmic.

It localises to the membrane. It is found in the cell projection. Its subcellular location is the filopodium. The protein localises to the cytoplasm. The protein resides in the cell cortex. It localises to the microvillus. Its function is as follows. Potential multifunctional C-type lectin receptor that may play roles in endocytosis and phagocytosis as well as in cell adhesion and migration. The sequence is that of CD302 antigen from Trichosurus vulpecula (Brush-tailed possum).